The following is a 345-amino-acid chain: uncharacterized protein (345 aa).

2 disordered regions span residues 1–58 (MPSP…WRGD) and 139–165 (KTNSTFYKDNGDSSEKQGSAESKNSPK). Over residues 27-39 (IKGEGSDDGKEKS) the composition is skewed to basic and acidic residues. Over residues 154 to 165 (KQGSAESKNSPK) the composition is skewed to polar residues.

The protein belongs to the MG307/MG309/MG338 family.

This is an uncharacterized protein from Mycoplasma pneumoniae (strain ATCC 29342 / M129 / Subtype 1) (Mycoplasmoides pneumoniae).